A 728-amino-acid chain; its full sequence is Catalase-peroxidase 1 (728 aa).

Positions 91–218 (WHSAGTYRTA…LAAVQMGLIY (128 aa)) form a cross-link, tryptophyl-tyrosyl-methioninium (Trp-Tyr) (with M-244). Histidine 92 acts as the Proton acceptor in catalysis. The segment at residues 218-244 (YVNPEGPDGNPDPVAAAHDIRETFARM) is a cross-link (tryptophyl-tyrosyl-methioninium (Tyr-Met) (with W-91)). Heme b is bound at residue histidine 259.

This sequence belongs to the peroxidase family. Peroxidase/catalase subfamily. In terms of assembly, homodimer or homotetramer. It depends on heme b as a cofactor. Post-translationally, formation of the three residue Trp-Tyr-Met cross-link is important for the catalase, but not the peroxidase activity of the enzyme.

The catalysed reaction is H2O2 + AH2 = A + 2 H2O. The enzyme catalyses 2 H2O2 = O2 + 2 H2O. Bifunctional enzyme with both catalase and broad-spectrum peroxidase activity. The polypeptide is Catalase-peroxidase 1 (Burkholderia cenocepacia (strain ATCC BAA-245 / DSM 16553 / LMG 16656 / NCTC 13227 / J2315 / CF5610) (Burkholderia cepacia (strain J2315))).